The primary structure comprises 498 residues: MAKYIMALDAGTTSNRCILFNEKGEMCSVAQKEFTQFFPKPGWVEHDAEEIWATQLEVAKEAMANIQATAADICAIGITNQRETTIVWDKNTGEPVYHAIVWQCRRTAEYADSLKEKGLTETFRKKTGLVIDAYFSATKLKWLLDNVPGARERAERGELLFGTVETWLIWKLTQGQVHVTDYSNASRTMMFNINTLKWDDEILKELDIPKSMLPKPMPSSCVYGEVNPVYFGGPIPIAGAAGDQQAALFGQTCFRAGEAKNTYGTGCFLLMNTGEMPVSSKNGLVTTIAWGIDGKVVYALEGSIFVAGASIQWLRDEMKFIDSSTDSEYMARKVKDTNGCYVVPAFTGLGAPYWDQYARGTIVGLTRGVNKYHVIRATLESMAFQVNDVLEAMKADSGINLTSLKVDGGASANNLLMQMQADISNAPVNRPVCVETTAMGAAYLAGLAVGYWDSMDDIKRNWAIDRVFEPEIADDMREKKRKMWKKAVACAFNWAKDD.

Threonine 12 contributes to the ADP binding site. ATP-binding residues include threonine 12, threonine 13, and serine 14. Residue threonine 12 coordinates sn-glycerol 3-phosphate. Arginine 16 lines the ADP pocket. Sn-glycerol 3-phosphate is bound by residues arginine 82, glutamate 83, tyrosine 134, and aspartate 243. Arginine 82, glutamate 83, tyrosine 134, aspartate 243, and glutamine 244 together coordinate glycerol. ADP-binding residues include threonine 265 and glycine 308. ATP-binding residues include threonine 265, glycine 308, glutamine 312, and glycine 409. Glycine 409 and asparagine 413 together coordinate ADP.

The protein belongs to the FGGY kinase family. As to quaternary structure, homotetramer and homodimer (in equilibrium).

It catalyses the reaction glycerol + ATP = sn-glycerol 3-phosphate + ADP + H(+). The protein operates within polyol metabolism; glycerol degradation via glycerol kinase pathway; sn-glycerol 3-phosphate from glycerol: step 1/1. Activated by phosphorylation and inhibited by fructose 1,6-bisphosphate (FBP). In terms of biological role, key enzyme in the regulation of glycerol uptake and metabolism. Catalyzes the phosphorylation of glycerol to yield sn-glycerol 3-phosphate. The sequence is that of Glycerol kinase from Agathobacter rectalis (strain ATCC 33656 / DSM 3377 / JCM 17463 / KCTC 5835 / VPI 0990) (Eubacterium rectale).